A 419-amino-acid polypeptide reads, in one-letter code: CinA-like protein (419 aa).

The protein belongs to the CinA family.

The protein is CinA-like protein of Picosynechococcus sp. (strain ATCC 27264 / PCC 7002 / PR-6) (Agmenellum quadruplicatum).